Consider the following 308-residue polypeptide: Ribose 1,5-bisphosphate isomerase (308 aa).

Residues 24–27 and R67 contribute to the substrate site; that span reads RGAG. C129 (proton acceptor) is an active-site residue. The Proton donor role is filled by D198. Residues 208–209 and K234 contribute to the substrate site; that span reads NK.

Belongs to the eIF-2B alpha/beta/delta subunits family. R15P isomerase subfamily.

It carries out the reaction alpha-D-ribose 1,5-bisphosphate = D-ribulose 1,5-bisphosphate. Catalyzes the isomerization of ribose 1,5-bisphosphate (R15P) to ribulose 1,5-bisphosphate (RuBP), the CO(2) acceptor and substrate for RubisCO. Functions in an archaeal AMP degradation pathway, together with AMP phosphorylase and RubisCO. The protein is Ribose 1,5-bisphosphate isomerase of Methanocaldococcus jannaschii (strain ATCC 43067 / DSM 2661 / JAL-1 / JCM 10045 / NBRC 100440) (Methanococcus jannaschii).